A 332-amino-acid chain; its full sequence is Transcription initiation factor IIB 2 (332 aa).

A compositionally biased stretch (polar residues) spans 1-10; it reads MSDTITTRTY. The interval 1-36 is disordered; sequence MSDTITTRTYSADAKSRDVRPRESERDETQQDETQV. Positions 14-29 are enriched in basic and acidic residues; it reads AKSRDVRPRESERDET. The segment at 33-63 adopts a TFIIB-type zinc-finger fold; it reads ETQVCPECSGHLVTDEEHGETICEDCGLVVE. Positions 37, 40, 55, and 58 each coordinate Zn(2+). The segment at 77–106 is disordered; sequence DSAERDSKSRVGAPTTKMMHDKGLSTNIGW. A run of 2 repeats spans residues 149–232 and 243–324.

The protein belongs to the TFIIB family.

In terms of biological role, stabilizes TBP binding to an archaeal box-A promoter. Also responsible for recruiting RNA polymerase II to the pre-initiation complex (DNA-TBP-TFIIB). This is Transcription initiation factor IIB 2 from Haloferax volcanii (strain ATCC 29605 / DSM 3757 / JCM 8879 / NBRC 14742 / NCIMB 2012 / VKM B-1768 / DS2) (Halobacterium volcanii).